Reading from the N-terminus, the 326-residue chain is Pyruvate dehydrogenase E1 component subunit alpha (326 aa).

Heterodimer of an alpha and a beta chain. Requires thiamine diphosphate as cofactor.

It catalyses the reaction N(6)-[(R)-lipoyl]-L-lysyl-[protein] + pyruvate + H(+) = N(6)-[(R)-S(8)-acetyldihydrolipoyl]-L-lysyl-[protein] + CO2. The pyruvate dehydrogenase complex catalyzes the overall conversion of pyruvate to acetyl-CoA and CO(2). It contains multiple copies of three enzymatic components: pyruvate dehydrogenase (E1), dihydrolipoamide acetyltransferase (E2) and lipoamide dehydrogenase (E3). The chain is Pyruvate dehydrogenase E1 component subunit alpha (pdhA) from Rickettsia prowazekii (strain Madrid E).